The primary structure comprises 400 residues: Probable glycosyltransferase WbjE (400 aa).

It belongs to the glycosyltransferase group 1 family. Glycosyltransferase 4 subfamily.

It functions in the pathway bacterial outer membrane biogenesis; LPS O-antigen biosynthesis. The polypeptide is Probable glycosyltransferase WbjE (wbjE) (Pseudomonas aeruginosa).